A 278-amino-acid chain; its full sequence is Transmembrane protein 41A-B (278 aa).

The signal sequence occupies residues 1–23 (MRSIWGLIVLVAAATFYLYLLSA). Helical transmembrane passes span 78 to 98 (GYVFILFCSAYLYKQSFAIPG), 101 to 121 (FLNMLSGALFGPLHGLIIACT), 164 to 184 (LFFFLLFLRFFPMTPNWFLNV), 191 to 211 (IPIPIFFFSILIGLIPYNFIC), and 230 to 250 (WFTLLQLLLIACVALLPGALI).

It belongs to the TMEM41 family.

The protein localises to the membrane. In Danio rerio (Zebrafish), this protein is Transmembrane protein 41A-B.